The chain runs to 104 residues: Iron-sulfur cluster assembly protein CyaY (104 aa).

Belongs to the frataxin family.

Functionally, involved in iron-sulfur (Fe-S) cluster assembly. May act as a regulator of Fe-S biogenesis. In Vibrio parahaemolyticus serotype O3:K6 (strain RIMD 2210633), this protein is Iron-sulfur cluster assembly protein CyaY.